The primary structure comprises 154 residues: Small heat shock protein IbpB (154 aa).

A sHSP domain is found at 26–137 (GQEPQGFPPY…QPQRIAIGSA (112 aa)).

This sequence belongs to the small heat shock protein (HSP20) family. As to quaternary structure, homodimer. Forms homomultimers of about 100-150 subunits at optimal growth temperatures. Conformation changes to oligomers at high temperatures or high ionic concentrations. The decrease in size of the multimers is accompanied by an increase in chaperone activity.

Its subcellular location is the cytoplasm. In terms of biological role, associates with aggregated proteins, together with IbpA, to stabilize and protect them from irreversible denaturation and extensive proteolysis during heat shock and oxidative stress. Aggregated proteins bound to the IbpAB complex are more efficiently refolded and reactivated by the ATP-dependent chaperone systems ClpB and DnaK/DnaJ/GrpE. Its activity is ATP-independent. The sequence is that of Small heat shock protein IbpB from Yersinia pseudotuberculosis serotype O:1b (strain IP 31758).